Consider the following 512-residue polypeptide: Oxalate--CoA ligase (512 aa).

Position 168–179 (His-168–Val-179) interacts with ATP. Phosphoserine is present on residues Ser-283 and Ser-284. The FACS motif lies at Asp-381–Asp-429. The Microbody targeting signal signature appears at Ala-510–Leu-512.

It belongs to the ATP-dependent AMP-binding enzyme family.

It localises to the peroxisome matrix. The protein resides in the peroxisome membrane. The enzyme catalyses oxalate + ATP + CoA = oxalyl-CoA + AMP + diphosphate. In terms of biological role, catalyzes the first step in a degradation pathway of oxalate to CO(2) to protect the cell against the harmful effects of oxalate derived from endogenous processes or an environmental sources. The polypeptide is Oxalate--CoA ligase (pcs60) (Schizosaccharomyces pombe (strain 972 / ATCC 24843) (Fission yeast)).